The following is a 162-amino-acid chain: Glycogen accumulation regulator GarA (162 aa).

Threonine 21 is modified (phosphothreonine; by PknG). Position 22 is a phosphothreonine; by PknB (threonine 22). Positions 77–126 constitute an FHA domain; it reads TSAGRHPDSDIFLDDVTVSRRHAEFRLENNEFNVVDVGSLNGTYVNREPV.

Monomer. Phosphorylated on Thr-22 by PknB. Phosphorylated on Thr-21 by PknG. Phosphorylation at either Thr-21 or Thr-22 prevents binding to target enzymes.

Its function is as follows. Involved in regulation of glutamate metabolism. This is Glycogen accumulation regulator GarA (garA) from Mycobacterium tuberculosis (strain CDC 1551 / Oshkosh).